Here is a 515-residue protein sequence, read N- to C-terminus: Cytochrome P450 76C3 (515 aa).

Residues 5–25 (LIQGMSLPLYFLLTLFFFFFA) traverse the membrane as a helical segment. Cys-451 contacts heme.

It belongs to the cytochrome P450 family. It depends on heme as a cofactor.

It localises to the membrane. The protein is Cytochrome P450 76C3 (CYP76C3) of Arabidopsis thaliana (Mouse-ear cress).